The sequence spans 292 residues: Probable 2-(5''-triphosphoribosyl)-3'-dephosphocoenzyme-A synthase (292 aa).

The protein belongs to the CitG/MdcB family.

The catalysed reaction is 3'-dephospho-CoA + ATP = 2'-(5''-triphospho-alpha-D-ribosyl)-3'-dephospho-CoA + adenine. This chain is Probable 2-(5''-triphosphoribosyl)-3'-dephosphocoenzyme-A synthase, found in Shigella flexneri.